Consider the following 160-residue polypeptide: Aspartate 1-decarboxylase 2 (160 aa).

The Schiff-base intermediate with substrate; via pyruvic acid role is filled by S25. S25 is subject to Pyruvic acid (Ser). T57 provides a ligand contact to substrate. The active-site Proton donor is the Y58. 73–75 (GAA) provides a ligand contact to substrate.

Belongs to the PanD family. In terms of assembly, heterooctamer of four alpha and four beta subunits. Pyruvate is required as a cofactor. Is synthesized initially as an inactive proenzyme, which is activated by self-cleavage at a specific serine bond to produce a beta-subunit with a hydroxyl group at its C-terminus and an alpha-subunit with a pyruvoyl group at its N-terminus.

The protein localises to the cytoplasm. The enzyme catalyses L-aspartate + H(+) = beta-alanine + CO2. The protein operates within cofactor biosynthesis; (R)-pantothenate biosynthesis; beta-alanine from L-aspartate: step 1/1. In terms of biological role, catalyzes the pyruvoyl-dependent decarboxylation of aspartate to produce beta-alanine. This is Aspartate 1-decarboxylase 2 from Frankia casuarinae (strain DSM 45818 / CECT 9043 / HFP020203 / CcI3).